Consider the following 515-residue polypeptide: Cytochrome P450 monooxygenase nsrP (515 aa).

A helical transmembrane segment spans residues 20 to 40 (FGTAAFLAVLLSALAFLSYTP). N-linked (GlcNAc...) asparagine glycans are attached at residues Asn84, Asn406, and Asn411. Cys452 serves as a coordination point for heme.

Belongs to the cytochrome P450 family. Heme is required as a cofactor.

The protein localises to the membrane. It participates in secondary metabolite biosynthesis. Cytochrome P450 monooxygenase; part of the gene cluster that mediates the biosynthesis of the tetrahydroxanthone dimer neosartorin, which exhibits antibacterial activity. The two different monomeric units appear to be synthesized by the same set of enzymes, among which the Baeyer-Villiger monooxygenase nsrF is the key enzyme for the divergence of the biosynthetic routes. The pathway begins with the synthesis of atrochrysone thioester by the polyketide synthase nsrB. The atrochrysone carboxyl ACP thioesterase nsrC then breaks the thioester bond and releases the atrochrysone carboxylic acid from AacuL. Atrochrysone carboxylic acid is decarboxylated by the decarboxylase nsrE, and oxidized by the anthrone oxygenase nsrD to yield emodin. Emodin is then reduced to emodin hydroquinone by the oxidoreductase nsrR. A-ring reduction by the short chain dehydrogenase nsrJ, dehydration by the scytalone dehydratase-like protein nsrI and probable spontaneous re-oxidation, results in overall deoxygenation to chrysophanol. The Baeyer-Villiger monooxygenase nsrF accepts chrysophanol as a substrate to insert one oxygen atom at two different positions to yield the precursors of both monomric units. NsrF is promiscuous/flexible in interacting with the 2 (non methylated and methylated) aromatic rings of chrysophanol, thus diverging the biosynthetic pathway at this point. After the hydrolysis of the lactones, methylesterification by the methyltransferase nsrG yields respectively moniliphenone and 2,2',6'-trihydroxy-4-methyl-6-methoxya-cyldiphenylmethanone. The next steps are the hydroxylation by the FAD-dependent monooxygenase nsrK, followed by isomerization by the monooxygenase nsrQ. The short chain dehydrogenase/reductase nsrO then catalyzes the C-5 ketoreduction to give the xanthone skeleton of blennolide C and 5-acetylblennolide A. The acetyltransferase nsrL has a strict substrate specificity and uses only blennolide A but not blennolide C to yield 5-acetylblennolide A as the single-acetylated product. In the final step of the biosynthesis, the heterodimerization of the 2 xanthones, blennolide C and 5-acetylblennolide A, is catalyzed by the cytochrome P450 monooxygenase nsrP. NsrP can utilize at least three different xanthones as its substrates to perform the dimerization reaction. The sequence is that of Cytochrome P450 monooxygenase nsrP from Aspergillus novofumigatus (strain IBT 16806).